The chain runs to 501 residues: Growth/differentiation factor 5 (501 aa).

Residues 1 to 27 (MRLPKLLTFLLWYLAWLDLEFICTVLG) form the signal peptide. Residues 28–381 (APDLGQRPQG…YLFSQRRKRR (354 aa)) constitute a propeptide that is removed on maturation. The segment at 29 to 169 (PDLGQRPQGT…EPFRPPPITP (141 aa)) is disordered. A compositionally biased stretch (pro residues) spans 99 to 111 (PRPGGPEPKPGHP). Over residues 148-162 (KAREPGPPREPKEPF) the composition is skewed to basic and acidic residues. Residue asparagine 189 is glycosylated (N-linked (GlcNAc...) asparagine). Residues 246 to 265 (PSDTAKPAAPGGGRAAQLKL) form a disordered region. 3 disulfides stabilise this stretch: cysteine 400–cysteine 466, cysteine 429–cysteine 498, and cysteine 433–cysteine 500.

This sequence belongs to the TGF-beta family. In terms of assembly, homodimer; disulfide-linked. Interacts with serine proteases, HTRA1 and HTRA3. Following LPS binding, may form a complex with CXCR4, HSP90AA1 and HSPA8. Interacts with high affinity with NOG; inhibits chondrogenesis. Interacts with high affinity with BMPR1B and lower affinity with BMPR1A; positively regulates chondrocyte differentiation and induces SMAD dependent signaling. Interacts with FBN1 (via N-terminal domain) and FBN2. Interacts with TGFBR3. As to expression, predominantly expressed in long bones during embryonic development. Expressed in monocytes (at protein level).

Its subcellular location is the secreted. The protein localises to the cell membrane. Growth factor involved in bone and cartilage formation. During cartilage development regulates differentiation of chondrogenic tissue through two pathways. Firstly, positively regulates differentiation of chondrogenic tissue through its binding of high affinity with BMPR1B and of less affinity with BMPR1A, leading to induction of SMAD1-SMAD5-SMAD8 complex phosphorylation and then SMAD protein signaling transduction. Secondly, negatively regulates chondrogenic differentiation through its interaction with NOG. Required to prevent excessive muscle loss upon denervation. This function requires SMAD4 and is mediated by phosphorylated SMAD1/5/8. Binds bacterial lipopolysaccharide (LPS) and mediates LPS-induced inflammatory response, including TNF secretion by monocytes. In Homo sapiens (Human), this protein is Growth/differentiation factor 5 (GDF5).